The following is a 139-amino-acid chain: Probable disulfide formation protein C 1 (139 aa).

A helical transmembrane segment spans residues 8–27; that stretch reads EYALFTAWGASFIATLGSLY. Cysteine 37 and cysteine 40 form a disulfide bridge. 2 helical membrane-spanning segments follow: residues 42–61 and 68–85; these read YQRIFMYPFVLWLGIAVVKK and YSLPIASIGACISLYHYV. Cysteines 99 and 104 form a disulfide. A helical membrane pass occupies residues 113–135; it reads GFVTIPFLALIGFITIAVCSFIV.

The protein belongs to the DsbB family. BdbC subfamily.

The protein localises to the cell membrane. Its function is as follows. Required for disulfide bond formation in some proteins. The chain is Probable disulfide formation protein C 1 (bdbC1) from Bacillus anthracis.